The sequence spans 491 residues: Probable polygalacturonase (491 aa).

A helical membrane pass occupies residues 15-35; it reads PIVSFYCFQVVSVLVAVVLLL. N-linked (GlcNAc...) asparagine glycans are attached at residues asparagine 165, asparagine 175, and asparagine 214. 4 PbH1 repeats span residues 230–256, 257–278, 319–340, and 348–369; these read SRNILIQGITILAPVRSPNTDGINPDS, CTNTRIEDCYIVSGDDCVAVKS, IQDVRAEDIVAINSESGIRIKT, and VKDIYVRGMTMKTMKWAFWMTG. Residue aspartate 271 is the Proton donor of the active site. N-linked (GlcNAc...) asparagine glycans are attached at residues asparagine 399 and asparagine 421.

The protein belongs to the glycosyl hydrolase 28 family.

It is found in the membrane. The catalysed reaction is (1,4-alpha-D-galacturonosyl)n+m + H2O = (1,4-alpha-D-galacturonosyl)n + (1,4-alpha-D-galacturonosyl)m.. The chain is Probable polygalacturonase from Vitis vinifera (Grape).